Here is a 345-residue protein sequence, read N- to C-terminus: Holliday junction branch migration complex subunit RuvB (345 aa).

Residues 4-194 (TDKLFGAAPE…FGIVARLEFY (191 aa)) form a large ATPase domain (RuvB-L) region. Residues Leu-33, Arg-34, Gly-75, Lys-78, Thr-79, Thr-80, 141 to 143 (EDY), Arg-184, Tyr-194, and Arg-231 each bind ATP. Thr-79 contacts Mg(2+). Residues 195 to 265 (NAEELTRIVS…VADAALAMLD (71 aa)) form a small ATPAse domain (RuvB-S) region. The segment at 268 to 345 (PAGLDVMDRK…LHFGLPVKDA (78 aa)) is head domain (RuvB-H). Residues Arg-323 and Arg-328 each coordinate DNA.

Belongs to the RuvB family. As to quaternary structure, homohexamer. Forms an RuvA(8)-RuvB(12)-Holliday junction (HJ) complex. HJ DNA is sandwiched between 2 RuvA tetramers; dsDNA enters through RuvA and exits via RuvB. An RuvB hexamer assembles on each DNA strand where it exits the tetramer. Each RuvB hexamer is contacted by two RuvA subunits (via domain III) on 2 adjacent RuvB subunits; this complex drives branch migration. In the full resolvosome a probable DNA-RuvA(4)-RuvB(12)-RuvC(2) complex forms which resolves the HJ.

It localises to the cytoplasm. The catalysed reaction is ATP + H2O = ADP + phosphate + H(+). Its function is as follows. The RuvA-RuvB-RuvC complex processes Holliday junction (HJ) DNA during genetic recombination and DNA repair, while the RuvA-RuvB complex plays an important role in the rescue of blocked DNA replication forks via replication fork reversal (RFR). RuvA specifically binds to HJ cruciform DNA, conferring on it an open structure. The RuvB hexamer acts as an ATP-dependent pump, pulling dsDNA into and through the RuvAB complex. RuvB forms 2 homohexamers on either side of HJ DNA bound by 1 or 2 RuvA tetramers; 4 subunits per hexamer contact DNA at a time. Coordinated motions by a converter formed by DNA-disengaged RuvB subunits stimulates ATP hydrolysis and nucleotide exchange. Immobilization of the converter enables RuvB to convert the ATP-contained energy into a lever motion, pulling 2 nucleotides of DNA out of the RuvA tetramer per ATP hydrolyzed, thus driving DNA branch migration. The RuvB motors rotate together with the DNA substrate, which together with the progressing nucleotide cycle form the mechanistic basis for DNA recombination by continuous HJ branch migration. Branch migration allows RuvC to scan DNA until it finds its consensus sequence, where it cleaves and resolves cruciform DNA. The protein is Holliday junction branch migration complex subunit RuvB of Chromobacterium violaceum (strain ATCC 12472 / DSM 30191 / JCM 1249 / CCUG 213 / NBRC 12614 / NCIMB 9131 / NCTC 9757 / MK).